Here is a 406-residue protein sequence, read N- to C-terminus: Cysteine desulfurase (406 aa).

Lys-226 is subject to N6-(pyridoxal phosphate)lysine. Cys-364 serves as the catalytic Cysteine persulfide intermediate.

The protein belongs to the class-V pyridoxal-phosphate-dependent aminotransferase family. Csd subfamily. As to quaternary structure, homodimer. Interacts with SufE and the SufBCD complex composed of SufB, SufC and SufD. The interaction with SufE is required to mediate the direct transfer of the sulfur atom from the S-sulfanylcysteine. Pyridoxal 5'-phosphate is required as a cofactor.

Its subcellular location is the cytoplasm. The catalysed reaction is (sulfur carrier)-H + L-cysteine = (sulfur carrier)-SH + L-alanine. It catalyses the reaction L-selenocysteine + AH2 = hydrogenselenide + L-alanine + A + H(+). The protein operates within cofactor biosynthesis; iron-sulfur cluster biosynthesis. Its function is as follows. Cysteine desulfurases mobilize the sulfur from L-cysteine to yield L-alanine, an essential step in sulfur metabolism for biosynthesis of a variety of sulfur-containing biomolecules. Component of the suf operon, which is activated and required under specific conditions such as oxidative stress and iron limitation. Acts as a potent selenocysteine lyase in vitro, that mobilizes selenium from L-selenocysteine. Selenocysteine lyase activity is however unsure in vivo. The sequence is that of Cysteine desulfurase from Yersinia pestis bv. Antiqua (strain Angola).